The following is a 484-amino-acid chain: Monocarboxylate transporter 2 (484 aa).

Residues M1–D16 lie on the Cytoplasmic side of the membrane. A helical transmembrane segment spans residues G17–F37. Over P38–A60 the chain is Extracellular. The helical transmembrane segment at W61–V81 threads the bilayer. The Cytoplasmic segment spans residues N82–R87. Residues P88–T108 traverse the membrane as a helical segment. Residues S109–T116 lie on the Extracellular side of the membrane. Residues I117–G137 traverse the membrane as a helical segment. At K138–R144 the chain is on the cytoplasmic side. A helical transmembrane segment spans residues P145–F165. The Extracellular portion of the chain corresponds to N166–G174. The helical transmembrane segment at L175–L195 threads the bilayer. Residues M196 to G245 lie on the Cytoplasmic side of the membrane. The tract at residues P198–A223 is disordered. The helical transmembrane segment at F246–F266 threads the bilayer. Over L267–A281 the chain is Extracellular. The chain crosses the membrane as a helical span at residues A282–I302. Over A303–R311 the chain is Cytoplasmic. Residues I312 to L332 traverse the membrane as a helical segment. Residues A333 to T337 are Extracellular-facing. A helical transmembrane segment spans residues A338–F358. Over E359–S372 the chain is Cytoplasmic. Residues A373–G393 traverse the membrane as a helical segment. The Extracellular portion of the chain corresponds to K394–L405. The helical transmembrane segment at F406–I426 threads the bilayer. The Cytoplasmic segment spans residues N427–I484. Positions R437–I484 are disordered. Over residues E438–R448 the composition is skewed to basic residues. Composition is skewed to basic and acidic residues over residues H449–A465 and S474–I484.

The protein belongs to the major facilitator superfamily. Monocarboxylate porter (TC 2.A.1.13) family. In terms of assembly, homodimer. Interacts with GRID2IP. Interacts with EMB; interaction mediates SLC16A7 targeting to the plasma membrane. Interacts with isoform 2 of BSG.

The protein localises to the cell membrane. It is found in the basolateral cell membrane. It localises to the cytoplasm. The catalysed reaction is 3-methyl-2-oxobutanoate(out) + H(+)(out) = 3-methyl-2-oxobutanoate(in) + H(+)(in). It catalyses the reaction (S)-lactate(in) + H(+)(in) = (S)-lactate(out) + H(+)(out). The enzyme catalyses acetoacetate(out) + H(+)(out) = acetoacetate(in) + H(+)(in). It carries out the reaction (R)-3-hydroxybutanoate(out) + H(+)(out) = (R)-3-hydroxybutanoate(in) + H(+)(in). The catalysed reaction is 4-methyl-2-oxopentanoate(out) + H(+)(out) = 4-methyl-2-oxopentanoate(in) + H(+)(in). It catalyses the reaction pyruvate(out) + H(+)(out) = pyruvate(in) + H(+)(in). The enzyme catalyses (S)-3-hydroxybutanoate(out) + H(+)(out) = (S)-3-hydroxybutanoate(in) + H(+)(in). Transport activity exhibits steep dependence on substrate concentration. Substrate concentration sensitivity of SLC16A7 arises from the strong inter-subunit cooperativity of the SLC16A7 dimer during transport. Inhibited by AR-C155858. In terms of biological role, proton-coupled monocarboxylate symporter. Catalyzes the rapid transport across the plasma membrane of monocarboxylates such as L-lactate, pyruvate and ketone bodies, acetoacetate, beta-hydroxybutyrate and acetate. Dimerization is functionally required and both subunits work cooperatively in transporting substrate. The chain is Monocarboxylate transporter 2 (SLC16A7) from Meriones unguiculatus (Mongolian jird).